Reading from the N-terminus, the 525-residue chain is GMP synthase [glutamine-hydrolyzing] (525 aa).

In terms of domain architecture, Glutamine amidotransferase type-1 spans 9 to 207 (RILILDFGSQ…VRDICQCEAL (199 aa)). Cys-86 acts as the Nucleophile in catalysis. Residues His-181 and Glu-183 contribute to the active site. The 193-residue stretch at 208 to 400 (WTPAKIIDDA…LGLPYDMLYR (193 aa)) folds into the GMPS ATP-PPase domain. 235-241 (SGGVDSS) serves as a coordination point for ATP.

Homodimer.

It catalyses the reaction XMP + L-glutamine + ATP + H2O = GMP + L-glutamate + AMP + diphosphate + 2 H(+). Its pathway is purine metabolism; GMP biosynthesis; GMP from XMP (L-Gln route): step 1/1. Functionally, catalyzes the synthesis of GMP from XMP. This chain is GMP synthase [glutamine-hydrolyzing], found in Klebsiella pneumoniae (strain 342).